Reading from the N-terminus, the 319-residue chain is MAIKRTKAEKKIAYDKKLCSLLDEYTKVLIALADNVGSKQLQDIRRGLRGDSVVLMGKNTLIRRCIKVYAEKTGNHTFDPLMDLLVGNVGLIFTKGDLKEVREEVAKYKVGAPARVGLVAPVDVVVPPGNTGLDPSQTSFFQVLNIPTKINKGTVEIITPVELIKKGEKVGSSESALLAKLGIRPFSYGLQVTSVYEDGSVFSPEVLDLSEEDLIEKFATGVSMVASLSLAISYPTLAAVPHMFINGYKNVLAVAVETDYSYPHADKIKEYLKDPSKFAVAAPVAAGDSGASAAPKEEEKAAEPEEESDEEMGFSLFDD.

The interval 286-319 (AGDSGASAAPKEEEKAAEPEEESDEEMGFSLFDD) is disordered. Positions 304–319 (PEEESDEEMGFSLFDD) are enriched in acidic residues.

The protein belongs to the universal ribosomal protein uL10 family. P0 forms a pentameric complex by interaction with dimers of P1 and P2. Phosphorylated.

Functionally, ribosomal protein P0 is the functional equivalent of E.coli protein L10. This Zea mays (Maize) protein is Large ribosomal subunit protein uL10 (RP-P0).